The chain runs to 103 residues: UPF0145 protein BCE_5284 (103 aa).

The protein belongs to the UPF0145 family.

The protein is UPF0145 protein BCE_5284 of Bacillus cereus (strain ATCC 10987 / NRS 248).